The chain runs to 193 residues: 7-methyl-GTP pyrophosphatase (193 aa).

The active-site Proton acceptor is the aspartate 70.

It belongs to the Maf family. YceF subfamily. It depends on a divalent metal cation as a cofactor.

It localises to the cytoplasm. It carries out the reaction N(7)-methyl-GTP + H2O = N(7)-methyl-GMP + diphosphate + H(+). Its function is as follows. Nucleoside triphosphate pyrophosphatase that hydrolyzes 7-methyl-GTP (m(7)GTP). May have a dual role in cell division arrest and in preventing the incorporation of modified nucleotides into cellular nucleic acids. The protein is 7-methyl-GTP pyrophosphatase of Photobacterium profundum (strain SS9).